We begin with the raw amino-acid sequence, 295 residues long: MDLRDLKTFLHLAESRHFGRSARAMHVSPSTLSRQIQRLEEDLGQPLFVRDNRTVTLTEAGEELRVFAQQTLLQYQQLRHTLDQQGPSLSGELHIFCSVTAAYSHLPPILDRFRAEHPSVEIKLTTGDAADAMEKVVTGEADLAIAGKPETLPGAVAFSMLENLAVVLIAPALPCPVRNQVSVDKPDWSTVPFIMADQGPVRRRIELWFRRHKISNPQIYATVGGHEAMVSMVALGCGVALLPEVVLENSPEPVRNRVMILERSDEKTPFELGVCAQKKRLHEPLIDAFWKILPN.

The 58-residue stretch at 1-58 folds into the HTH lysR-type domain; the sequence is MDLRDLKTFLHLAESRHFGRSARAMHVSPSTLSRQIQRLEEDLGQPLFVRDNRTVTLT. The segment at residues 18-37 is a DNA-binding region (H-T-H motif); the sequence is FGRSARAMHVSPSTLSRQIQ.

It belongs to the LysR transcriptional regulatory family.

The protein resides in the cytoplasm. Its function is as follows. This protein activates the transcription of the IlvC gene in the presence of acetolactate or acetohydroxybutyrate. IlvY is also a negative regulator of its own expression. This Salmonella typhi protein is HTH-type transcriptional activator IlvY (ilvY).